The chain runs to 527 residues: Phosphoprotein (527 aa).

Disordered stretches follow at residues 29-225 and 285-319; these read NSLV…PDEL and PQCH…QDDD. Basic and acidic residues-rich tracts occupy residues 49–60 and 120–134; these read NEIKHLSTRDQE and CNRE…DGHS. 2 stretches are compositionally biased toward polar residues: residues 135–161 and 285–301; these read NTEG…STSY and PQCH…TDNA. A compositionally biased stretch (acidic residues) spans 310–319; sequence EEEDYLQDDD. A multimerization region spans residues 312 to 400; sequence EDYLQDDDFE…LSSVMIAIPG (89 aa). The interaction with the nucleocapsid (N-RNA) stretch occupies residues 479-527; it reads VSRTVINSIITARVNNPELAAKLKLAVAKAQTKEELERIHKSIIKNLKN.

This sequence belongs to the morbillivirus P protein family. In terms of assembly, homotetramer. Interacts (via multimerization domain) with polymerase L; this interaction forms the polymerase L-P complex. Interacts (via N-terminus) with N0 (via Ncore); this interaction allows P to chaperon N0 to avoid N polymerization before encapsidation. Interacts (via C-terminus) with N-RNA template; this interaction positions the polymerase on the template for both transcription and replication.

It is found in the host cytoplasm. Functionally, essential cofactor of the RNA polymerase L that plays a central role in the transcription and replication by forming the polymerase complex with RNA polymerase L and recruiting L to the genomic N-RNA template for RNA synthesis. Also plays a central role in the encapsidation of nascent RNA chains by forming the encapsidation complex with the nucleocapsid protein N (N-P complex). Acts as a chaperone for newly synthesized free N protein, so-called N0, allowing encapsidation of nascent RNA chains during replication. The nucleoprotein protein N prevents excessive phosphorylation of P, which leads to down-regulation of viral transcription/ replication. Participates, together with N, in the formation of viral factories (viroplasms), which are large inclusions in the host cytoplasm where replication takes place. The chain is Phosphoprotein (P/V) from Tupaia paramyxovirus (TPMV).